We begin with the raw amino-acid sequence, 198 residues long: Imidazoleglycerol-phosphate dehydratase (198 aa).

This sequence belongs to the imidazoleglycerol-phosphate dehydratase family.

The protein resides in the cytoplasm. It catalyses the reaction D-erythro-1-(imidazol-4-yl)glycerol 3-phosphate = 3-(imidazol-4-yl)-2-oxopropyl phosphate + H2O. The protein operates within amino-acid biosynthesis; L-histidine biosynthesis; L-histidine from 5-phospho-alpha-D-ribose 1-diphosphate: step 6/9. In Nitratidesulfovibrio vulgaris (strain DP4) (Desulfovibrio vulgaris), this protein is Imidazoleglycerol-phosphate dehydratase.